The following is a 688-amino-acid chain: Probable xyloglucan glycosyltransferase 7 (688 aa).

The disordered stretch occupies residues 1–25 (MAPSWWGRSGGGGVGNGGGTPVVVK). Gly residues predominate over residues 8–20 (RSGGGGVGNGGGT). 2 helical membrane-spanning segments follow: residues 121-141 (VSLVLSLLLLAVEVAAYLQGW) and 183-203 (VALFMVQSIDRLVLCLGCFWI). The active site involves D269. Positions 328 and 330 each coordinate substrate. Residue D422 is part of the active site. The next 2 membrane-spanning stretches (helical) occupy residues 500 to 520 (LILPFYSFTLFCVILPMTMFV) and 525 to 545 (LPAWVVCYIPATMSILNILPA). The interval 604-635 (HSKQQRVGSAPNLDALTKEESNPKKDSKKKKH) is disordered. Residues 619-628 (LTKEESNPKK) are compositionally biased toward basic and acidic residues. Helical transmembrane passes span 638–657 (IYRKELALSFLLLTAAARSL) and 663–683 (IHFYFLLFQGVSFLVVGLDLI).

Belongs to the glycosyltransferase 2 family. Plant cellulose synthase-like C subfamily.

Its subcellular location is the golgi apparatus membrane. Its function is as follows. Probable beta-1,4-glucan synthase rather involved in the synthesis of the xyloglucan backbone than cellulose. Seems to work simultaneously with xyloglucan 6-xylosyltransferase. Xyloglucan is a noncellulosic polysaccharides of plant cell wall and consists of a glucan backbone substituted by xylose, galactose and fucose. The protein is Probable xyloglucan glycosyltransferase 7 (CSLC7) of Oryza sativa subsp. japonica (Rice).